The sequence spans 219 residues: MLITFEGIDGAGKSTQIRKLQKLLIGAHIDSITLREPGGTEVAEKIRQILLESRHEISPIGELLLFSASRAELVQQVILPAIDNGTTVILDRFFDSTIAYQGYGREIDQVMLQTIITLSTFSLQPDITFYLDISPENALMRKFSEKSLPIAFDESELDRMERSGLDFFRKVRQGYLDIIHKNERRFVLLDALDDPQMIHKRIIASLKERFPVFSGIKTR.

7–14 (GIDGAGKS) is an ATP binding site.

It belongs to the thymidylate kinase family.

It carries out the reaction dTMP + ATP = dTDP + ADP. Its function is as follows. Phosphorylation of dTMP to form dTDP in both de novo and salvage pathways of dTTP synthesis. This Chlorobium limicola (strain DSM 245 / NBRC 103803 / 6330) protein is Thymidylate kinase.